Consider the following 226-residue polypeptide: Thiopurine S-methyltransferase (226 aa).

Trp-16, Met-51, Glu-72, and Arg-131 together coordinate S-adenosyl-L-methionine.

This sequence belongs to the class I-like SAM-binding methyltransferase superfamily. TPMT family.

The protein localises to the cytoplasm. It carries out the reaction S-adenosyl-L-methionine + a thiopurine = S-adenosyl-L-homocysteine + a thiopurine S-methylether.. The sequence is that of Thiopurine S-methyltransferase from Francisella tularensis subsp. novicida (strain U112).